A 25-amino-acid polypeptide reads, in one-letter code: Alanine racemase (25 aa).

It belongs to the alanine racemase family. As to quaternary structure, homodimer. Pyridoxal 5'-phosphate serves as cofactor.

It catalyses the reaction L-alanine = D-alanine. It participates in amino-acid biosynthesis; D-alanine biosynthesis; D-alanine from L-alanine: step 1/1. Catalyzes the interconversion of L-alanine and D-alanine. This Pseudomonas fluorescens protein is Alanine racemase.